A 349-amino-acid polypeptide reads, in one-letter code: Aminomethyltransferase (349 aa).

It belongs to the GcvT family. As to quaternary structure, the glycine cleavage system is composed of four proteins: P, T, L and H.

The enzyme catalyses N(6)-[(R)-S(8)-aminomethyldihydrolipoyl]-L-lysyl-[protein] + (6S)-5,6,7,8-tetrahydrofolate = N(6)-[(R)-dihydrolipoyl]-L-lysyl-[protein] + (6R)-5,10-methylene-5,6,7,8-tetrahydrofolate + NH4(+). Its function is as follows. The glycine cleavage system catalyzes the degradation of glycine. The polypeptide is Aminomethyltransferase (Thermus thermophilus (strain ATCC BAA-163 / DSM 7039 / HB27)).